A 253-amino-acid chain; its full sequence is Aminoglycoside nucleotidyltransferase (4') (253 aa).

In terms of assembly, homodimer.

The enzyme catalyses kanamycin A + ATP = 4'-adenylylkanamycin A + diphosphate. The catalysed reaction is amikacin + ATP = 4'-adenylylamikacin + diphosphate. It catalyses the reaction neomycin B + ATP = 4'-adenylylneomycin B + diphosphate. It carries out the reaction paromomycin + ATP = 4'-adenylylparomomycin + diphosphate. The enzyme catalyses ribostamycin + ATP = 4'-adenylylribostamycin + diphosphate. The catalysed reaction is tobramycin + ATP = 4'-adenylyltobramycin + diphosphate. It catalyses the reaction kanamycin A + CTP = 4'-cytidylylkanamycin A + diphosphate. It carries out the reaction kanamycin A + GTP = 4'-guanylylkanamycin A + diphosphate. The enzyme catalyses kanamycin A + ITP = 4'-inosinylylkanamycin A + diphosphate. The catalysed reaction is dTTP + kanamycin A = 4'-thymidylylkanamycin A + diphosphate. It catalyses the reaction kanamycin A + UTP = 4'-uridylylkanamycin A + diphosphate. It carries out the reaction kanamycin A + dATP = 4'-(2'-deoxyadenylyl)kanamycin A + diphosphate. The enzyme catalyses kanamycin A + dCTP = 4'-(2'-deoxycytidylyl)kanamycin A + diphosphate. The catalysed reaction is kanamycin A + dGTP = 4'-(2'-deoxyguanylyl)kanamycin A + diphosphate. It catalyses the reaction dUTP + kanamycin A = 4'-(2'-deoxyuridylyl)kanamycin A + diphosphate. It carries out the reaction amikacin + GTP = 4'-guanylylamikacin + diphosphate. The enzyme catalyses amikacin + ITP = 4'-inosinylylamikacin + diphosphate. The catalysed reaction is amikacin + CTP = 4'-cytidylylamikacin + diphosphate. It catalyses the reaction amikacin + UTP = 4'-uridylylamikacin + diphosphate. It carries out the reaction amikacin + dTTP = 4'-thymidylylamikacin + diphosphate. Inactivates aminoglycoside antibiotics such as kanamycin by catalyzing the transfer of a nucleotidyl group from nucleoside triphosphates such as (d)ATP to the 4'-hydroxyl group of the aminoglycoside. This is Aminoglycoside nucleotidyltransferase (4') from Bacillus sp.